The chain runs to 335 residues: Rho guanine nucleotide exchange factor 39 (335 aa).

A DH domain is found at 22–197; sequence KRACTARELL…SETAQRVHTI (176 aa). One can recognise a PH domain in the interval 227–331; the sequence is WFLRQGWLLV…WYHSLTWAIS (105 aa).

Strongly expressed in hepatocellular carcinoma (HCC) compared with their non-cancerous counterparts.

It is found in the cell membrane. Its function is as follows. Promotes cell proliferation. In Homo sapiens (Human), this protein is Rho guanine nucleotide exchange factor 39 (ARHGEF39).